The following is a 938-amino-acid chain: Isoleucine--tRNA ligase (938 aa).

A 'HIGH' region motif is present at residues 58-68 (PYANGSIHIGH). E561 lines the L-isoleucyl-5'-AMP pocket. A 'KMSKS' region motif is present at residues 602 to 606 (KMSKS). K605 contacts ATP. Positions 901, 904, 921, and 924 each coordinate Zn(2+).

This sequence belongs to the class-I aminoacyl-tRNA synthetase family. IleS type 1 subfamily. Monomer. Requires Zn(2+) as cofactor.

The protein localises to the cytoplasm. The enzyme catalyses tRNA(Ile) + L-isoleucine + ATP = L-isoleucyl-tRNA(Ile) + AMP + diphosphate. Its function is as follows. Catalyzes the attachment of isoleucine to tRNA(Ile). As IleRS can inadvertently accommodate and process structurally similar amino acids such as valine, to avoid such errors it has two additional distinct tRNA(Ile)-dependent editing activities. One activity is designated as 'pretransfer' editing and involves the hydrolysis of activated Val-AMP. The other activity is designated 'posttransfer' editing and involves deacylation of mischarged Val-tRNA(Ile). This is Isoleucine--tRNA ligase from Erwinia tasmaniensis (strain DSM 17950 / CFBP 7177 / CIP 109463 / NCPPB 4357 / Et1/99).